Reading from the N-terminus, the 449-residue chain is MSLDSNPRIFTVSRLNAEVRLLLENEMGIVWLVGEISNLTVPVSGHWYLTLKDSQAQVKCAMFKGNNRRVNFKPQNGKQVLVKARLSLYEPRGDYQLIIESMQPEGDGRLQQEFDQLKMSLAAEGLFAQTAKKSLPEQPKRVGIITSQTGAALFDILHVLKRRDPNLPIVIYPTMVQGSGAAIQIAQAIGRANSRNECDILIVGRGGGSLEDLWCFNEEIVARTIAASEIPIVSAVGHEIDVTIADFVADVRAPTPSAAAELVSRDLSAQLQTVAHQKRRLNSAMERYLSHQQRSLSAYQHRIEKQHPQMQLNNQSQRLDDLNQRLMNHIQQRLQRQQYRVENLTLRLNNLSPTKRISQDKLHIEELKRRLLDSMDRNLLMQRHQLALAAEKLDTVSPLATLMRGYSITHNQDGKIITSTKQVELGDNITTRFADGDITSTVTKASELN.

This sequence belongs to the XseA family. As to quaternary structure, heterooligomer composed of large and small subunits.

It is found in the cytoplasm. The enzyme catalyses Exonucleolytic cleavage in either 5'- to 3'- or 3'- to 5'-direction to yield nucleoside 5'-phosphates.. Its function is as follows. Bidirectionally degrades single-stranded DNA into large acid-insoluble oligonucleotides, which are then degraded further into small acid-soluble oligonucleotides. The polypeptide is Exodeoxyribonuclease 7 large subunit (Aliivibrio fischeri (strain ATCC 700601 / ES114) (Vibrio fischeri)).